A 703-amino-acid chain; its full sequence is Metastasis-associated protein MTA1 (703 aa).

One can recognise a BAH domain in the interval Met1–Lys164. The ELM2 domain occupies Gly165–Gly276. A Glycyl lysine isopeptide (Lys-Gly) (interchain with G-Cter in ubiquitin) cross-link involves residue Lys182. The 53-residue stretch at Asp283 to Arg335 folds into the SANT domain. At Ser386 the chain carries Phosphoserine. Residues Cys393–Cys420 form a GATA-type; atypical zinc finger. Positions Asp437–Ser460 are disordered. Position 449 is a phosphoserine (Ser449). Residue Lys509 forms a Glycyl lysine isopeptide (Lys-Gly) (interchain with G-Cter in SUMO2 and SUMO3) linkage. The residue at position 522 (Ser522) is a Phosphoserine. The segment covering Glu542 to Pro552 has biased composition (basic and acidic residues). The segment at Glu542–Arg583 is disordered. An SH3-binding motif is present at residues Pro545–Pro552. Lys549 is covalently cross-linked (Glycyl lysine isopeptide (Lys-Gly) (interchain with G-Cter in SUMO2)). The span at Val553–Pro565 shows a compositional bias: low complexity. Thr564 carries the post-translational modification Phosphothreonine. Ser576 is subject to Phosphoserine. Thr578 carries the phosphothreonine modification. Lys614 is modified (N6-acetyllysine; alternate). Lys614 is covalently cross-linked (Glycyl lysine isopeptide (Lys-Gly) (interchain with G-Cter in ubiquitin); alternate). Ser627 bears the Phosphoserine mark. The tract at residues Asp644–Lys674 is interaction with RBBP4. Positions Ser661–Asp703 are disordered. Residues Leu684–Pro693 carry the SH3-binding motif. Positions Ile699–Asp703 match the SUMO interaction motif 1 (SIM); crucial for efficient sumoylation motif.

The protein belongs to the metastasis-associated protein family. Component of the nucleosome remodeling and deacetylase (NuRD) repressor complex, composed of core proteins MTA1, MTA2, MTA3, RBBP4, RBBP7, HDAC1, HDAC2, MBD2, MBD3, and peripherally associated proteins CDK2AP1, CDK2AP2, GATAD2A, GATAD2B, CHD3, CHD4 and CHD5. The exact stoichiometry of the NuRD complex is unknown, and some subunits such as MBD2 and MBD3, GATAD2A and GATAD2B, and CHD3, CHD4 and CHD5 define mutually exclusive NuRD complexes. Interacts with RBBP4; the interaction is direct. Interacts with BMAL1. Interacts with CLOCK. Interacts with COP1. Interacts with CSNK1G2 in the cytoplasm. Interacts with EP300. Interacts with HDAC2. Interacts with ITGB3BP/CENPR. Interacts with MBD3L2. Interacts with MDM2. Interacts with NACC2. Interacts with p53/TP53. Interacts with PIAS1. Interacts with PIAS3. Interacts with PIAS4. Interacts with PWWP2A. Interacts with PWWP2B. Interacts with SENP1. Interacts with SENP2. Interacts with SIX3; facilitates the binding of SIX3 to the core DNA motif of SIX3 promoter. Interacts with SUMO1. Interacts with SUMO2. Interacts with TFCP2L1; which is indispensable for TFCP2L1-mediated self-renewal-promoting effect and endoderm-inhibiting action. Interacts with TFAP2C. Interacts with TPR. Interacts with UBE2I/UBC9. In terms of processing, phosphorylation by CSNK1G2/CK1 triggered by estrogen enhances corepression of estrogen receptor (ER). Acetylation is essential for its transcriptional coactivator activity. Post-translationally, sumoylation positively regulates its transcriptional corepressor activity but does not affect the protein stability. Sumoylated preferentially by SUMO2 or SUMO3 than SUMO1. Sumoylation is enhanced by PIAS1/3/4 and preferentially sumoylated by SUMO2 in the presence of PIAS1/3/4. Desumoylated by SENP1. In terms of processing, ubiquitinated by COP1, which leads to proteasomal degradation. Isoform 1 abundant in testis and expressed at low levels in brain, heart, lung, liver, and kidney. Isoform 2 abundant in adrenal gland, brain, colon, heart, liver, lung, muscle, prostate, stomach, testis, and thymus and expressed at low levels in duodenum, kidney, pancreas, parotid, and spleen.

The protein resides in the nucleus. The protein localises to the nucleus envelope. It is found in the cytoplasm. Its subcellular location is the cytoskeleton. It localises to the rough endoplasmic reticulum. The protein resides in the golgi apparatus. The protein localises to the zymogen granule. Transcriptional coregulator which can act as both a transcriptional corepressor and coactivator. Acts as a component of the histone deacetylase NuRD complex which participates in the remodeling of chromatin. In the NuRD complex, regulates transcription of its targets by modifying the acetylation status of the target chromatin and cofactor accessibility to the target DNA. In conjunction with other components of NuRD, acts as a transcriptional corepressor of BRCA1, ESR1, TFF1 and CDKN1A. Acts as a transcriptional coactivator of BCAS3, and SUMO2, independent of the NuRD complex. Stimulates the expression of WNT1 by inhibiting the expression of its transcriptional corepressor SIX3. Regulates p53-dependent and -independent DNA repair processes following genotoxic stress. Regulates the stability and function of p53/TP53 by inhibiting its ubiquitination by COP1 and MDM2 thereby regulating the p53-dependent DNA repair. Plays a role in the regulation of the circadian clock and is essential for the generation and maintenance of circadian rhythms under constant light and for normal entrainment of behavior to light-dark (LD) cycles. Positively regulates the CLOCK-BMAL1 heterodimer mediated transcriptional activation of its own transcription and the transcription of CRY1. Regulates deacetylation of BMAL1 by regulating SIRT1 expression, resulting in derepressing CRY1-mediated transcription repression. With TFCP2L1, promotes establishment and maintenance of pluripotency in embryonic stem cells (ESCs) and inhibits endoderm differentiation. This chain is Metastasis-associated protein MTA1 (Mta1), found in Rattus norvegicus (Rat).